We begin with the raw amino-acid sequence, 63 residues long: Large ribosomal subunit protein bL35 (63 aa).

This sequence belongs to the bacterial ribosomal protein bL35 family.

The chain is Large ribosomal subunit protein bL35 from Campylobacter jejuni (strain RM1221).